The following is a 219-amino-acid chain: Transmembrane emp24 domain-containing protein 10 (219 aa).

Residues 1–31 form the signal peptide; that stretch reads MSGLSGPPARRGPFPLALLLLFLLGPRLVLA. The interval 1–142 is required for interaction with STX17; that stretch reads MSGLSGPPAR…KNYEEIAKVE (142 aa). The Lumenal portion of the chain corresponds to 32–185; sequence ISFHLPINSR…RDTNESTNTR (154 aa). Residues 41 to 193 form the GOLD domain; that stretch reads RKCLREEIHK…TRVLYFSIFS (153 aa). Residues 147–178 are required for TMED10 and TMED2 cis-Golgi network localization; the sequence is LEVELRRLEDLSESIVNDFAYMKKREEEMRDT. 2 positions are modified to dimethylated arginine: R171 and R176. The N-linked (GlcNAc...) asparagine glycan is linked to N179. Residues 186–206 form a helical membrane-spanning segment; the sequence is VLYFSIFSMFCLIGLATWQVF. The tract at residues 204-219 is interaction with COPG1; the sequence is QVFYLRRFFKAKKLIE. At 207-219 the chain is on the cytoplasmic side; sequence YLRRFFKAKKLIE. The interval 207–219 is interaction with ARF1 and IL1B; the sequence is YLRRFFKAKKLIE. The COPII vesicle coat-binding signature appears at 211 to 212; that stretch reads FF. The COPI vesicle coat-binding motif lies at 211-219; the sequence is FFKAKKLIE.

The protein belongs to the EMP24/GP25L family. In terms of assembly, predominantly dimeric and to a lesser extent monomeric in the ER. Monomer and dimer in ERGIC and cis-Golgi network. Forms homooligomer (via GOLD domain); the assembly is promoted by direct binding with leaderless cargos and may form a protein channel that facilitates cargo entry into the ERGIC. Forms heterooligomeric complexes with other members of the p24 family such as TMED2, TMED7 and TMED9. Interacts (via GOLD domain) with TMED2 (via GOLD domain); the complex is required for export of TMED10 from the ER to the cis-Golgi network; the complex is proposed to be involved in cis-Golgi network dynamics and / or biogenesis. Associates with the COPI vesicle coat subunits (coatomer). Tetramerization of the cytoplasmic domain at the Golgi membrane in vitro; the complex is proposed to interact with COPI coatomer and induce budding of the vesicles. Interacts with COPG1; the interaction involves TMED10 homodimer. Interacts with ARF1 (GDP-bound); the interaction probably involves a TMED10 oligomer. Interacts with SEC23A, SEC24B, SEC24C and SEC24D components of the coat protein complex II/COPII, indicative of an association of TMED10 with the COPII vesicle coat. Interacts with CD59. Interacts with MPPE1/PGAP5; the complex might recruit and sort GPI-anchored proteins to the ER-exit site, or the interaction might lead to recycling of PGAP5 between the ER and the Golgi. Interacts with F2LR1/PAR2. Interacts with KDELR2/ERD2; the interaction is disrupted by KDELR2 ligand. Found in a complex composed at least of SURF4, TMED2 and TMED10. Associates with the presenilin-dependent gamma-secretase complex. Interacts with STX17; the interaction is direct. Interacts with IL-1; the interaction is direct. Interacts with RAB21 (active GTP-bound form); the interaction is indirect and regulates TMED10 abundance and localization at the Golgi.

The protein localises to the endoplasmic reticulum membrane. It is found in the endoplasmic reticulum-Golgi intermediate compartment membrane. It localises to the golgi apparatus membrane. Its subcellular location is the golgi apparatus. The protein resides in the cis-Golgi network membrane. The protein localises to the trans-Golgi network membrane. It is found in the cytoplasmic vesicle. It localises to the secretory vesicle membrane. Its subcellular location is the cell membrane. The protein resides in the melanosome. Its function is as follows. Cargo receptor involved in protein vesicular trafficking and quality control in the endoplasmic reticulum (ER) and Golgi. The p24 protein family is a group of transmembrane proteins that bind coat protein complex I/COPI and coat protein complex II/COPII involved in vesicular trafficking between the membranes. Acts at the lumenal side for incorporation of secretory cargo molecules into transport vesicles and involved in vesicle coat formation at the cytoplasmic side. Mainly functions in the early secretory pathway and cycles between the ER, ER-Golgi intermediate compartment (ERGIC) and Golgi, mediating cargo transport through COPI and COPII-coated vesicles. In COPII vesicle-mediated anterograde transport, involved in the transport of GPI-anchored proteins by acting together with TMED2 as their cargo receptor; the function specifically implies SEC24C and SEC24D of the COPII vesicle coat and lipid raft-like microdomains of the ER. Recognizes GPI anchors structural remodeled in the ER by the GPI inositol-deacylase/PGAP1 and the metallophosphoesterase MPPE1/PGAP5. In COPI vesicle-mediated retrograde transport, involved in the biogenesis of COPI vesicles and vesicle coat recruitment. Involved in trafficking of amyloid beta A4 protein and soluble APP-beta release (independent from the modulation of gamma-secretase activity). Involved in the KDELR2-mediated retrograde transport of the toxin A subunit (CTX-A-K63)together with COPI and the COOH terminus of KDELR2. On Golgi membranes, acts as a primary receptor for ARF1-GDP, a GTP-binding protein involved in COPI-vesicle formation. Increases coatomer-dependent GTPase-activating activity of ARFGAP2 which mediates the hydrolysis of ARF1-bound GTP and therefore modulates protein trafficking from the Golgi apparatus. Involved in the exocytic trafficking of G protein-coupled receptors F2LR1/PAR2 (trypsin and tryspin-like enzyme receptor), OPRM1 (opioid receptor) and P2RY4 (UTD and UDP receptor) from the Golgi to the plasma membrane, thus contributing to receptor resensitization. In addition to its cargo receptor activity, may also act as a protein channel after oligomerization, facilitating the post-translational entry of leaderless cytoplasmic cargo into the ERGIC. Involved in the translocation into ERGIC, the vesicle entry and the secretion of leaderless cargos (lacking the secretion signal sequence), including the mature form of interleukin 1/IL-1 family members, the alpha-crystallin B chain HSPB5, the carbohydrate-binding proteins galectin-1/LGALS1 and galectin-3/LGALS3, the microtubule-associated protein Tau/MAPT, and the annexin A1/ANXA1; the translocation process is dependent on cargo protein unfolding and enhanced by chaperones HSP90AB1 and HSP90B1/GRP9. Could also associates with the presenilin-dependent gamma-secretase complex in order to regulate gamma-cleavages of the amyloid beta A4 protein to yield amyloid-beta 40/Abeta40. This is Transmembrane emp24 domain-containing protein 10 from Homo sapiens (Human).